A 252-amino-acid polypeptide reads, in one-letter code: Trans-aconitate 2-methyltransferase (252 aa).

This sequence belongs to the methyltransferase superfamily. Tam family.

It is found in the cytoplasm. The catalysed reaction is trans-aconitate + S-adenosyl-L-methionine = (E)-3-(methoxycarbonyl)pent-2-enedioate + S-adenosyl-L-homocysteine. In terms of biological role, catalyzes the S-adenosylmethionine monomethyl esterification of trans-aconitate. The chain is Trans-aconitate 2-methyltransferase from Escherichia coli (strain SE11).